Reading from the N-terminus, the 422-residue chain is Probable tRNA pseudouridine synthase D (422 aa).

Aspartate 83 acts as the Nucleophile in catalysis. Residues 164–386 (GFPNYFGSQR…AGGRRELLIK (223 aa)) form the TRUD domain.

Belongs to the pseudouridine synthase TruD family.

It carries out the reaction uridine(13) in tRNA = pseudouridine(13) in tRNA. Could be responsible for synthesis of pseudouridine from uracil-13 in transfer RNAs. The polypeptide is Probable tRNA pseudouridine synthase D (Thermococcus sibiricus (strain DSM 12597 / MM 739)).